The primary structure comprises 446 residues: MEGAEGQEELDWEALYLRLPLQNCSWNSTGWEPNWNVTVVPNTTWWQASAPFDTPAALVRAAAKAVVLGLLILATVVGNVFVIAAILLERHLRSAANNLILSLAVADLLVACLVMPLGAVYEVVQRWTLGPELCDMWTSGDVLCCTASILHLVAIALDRYWAVTNIDYIHASTAKRVGMMIACVWTVSFFVCIAQLLGWKDPDWNQRVSEDLRCVVSQDVGYQIFATASSFYVPVLIILILYWRIYQTARKRIRRRRGATARGGVGPPPVPAGGALVAGGGSGGIAAAVVAVIGRPLPTISETTTTGFTNVSSNNTSPEKQSCANGLEADPPTTGYGAVAAAYYPSLVRRKPKEAADSKRERKAAKTLAIITGAFVACWLPFFVLAILVPTCDCEVSPVLTSLSLWLGYFNSTLNPVIYTVFSPEFRHAFQRLLCGRRVRRRRAPQ.

At 1–65 (MEGAEGQEEL…AALVRAAAKA (65 aa)) the chain is on the extracellular side. Residues N23, N27, N36, and N42 are each glycosylated (N-linked (GlcNAc...) asparagine). The chain crosses the membrane as a helical span at residues 66–88 (VVLGLLILATVVGNVFVIAAILL). Residues 89 to 98 (ERHLRSAANN) lie on the Cytoplasmic side of the membrane. The chain crosses the membrane as a helical span at residues 99–120 (LILSLAVADLLVACLVMPLGAV). Residues 121-135 (YEVVQRWTLGPELCD) are Extracellular-facing. Cysteines 134 and 214 form a disulfide. Residues 136–157 (MWTSGDVLCCTASILHLVAIAL) form a helical membrane-spanning segment. Residues 158-176 (DRYWAVTNIDYIHASTAKR) are Cytoplasmic-facing. The helical transmembrane segment at 177–199 (VGMMIACVWTVSFFVCIAQLLGW) threads the bilayer. Over 200–227 (KDPDWNQRVSEDLRCVVSQDVGYQIFAT) the chain is Extracellular. Residues 228–249 (ASSFYVPVLIILILYWRIYQTA) form a helical membrane-spanning segment. Residues 250–367 (RKRIRRRRGA…SKRERKAAKT (118 aa)) are Cytoplasmic-facing. The span at 304–324 (TTTGFTNVSSNNTSPEKQSCA) shows a compositional bias: polar residues. Residues 304–329 (TTTGFTNVSSNNTSPEKQSCANGLEA) are disordered. Residues 368–391 (LAIITGAFVACWLPFFVLAILVPT) traverse the membrane as a helical segment. At 392 to 399 (CDCEVSPV) the chain is on the extracellular side. Residues 400 to 422 (LTSLSLWLGYFNSTLNPVIYTVF) form a helical membrane-spanning segment. Topologically, residues 423–446 (SPEFRHAFQRLLCGRRVRRRRAPQ) are cytoplasmic.

It belongs to the G-protein coupled receptor 1 family.

It localises to the cell membrane. This is a receptor for 5-hydroxytryptamine (serotonin), a biogenic hormone that function as a neurotransmitter, a hormone, and a mitogen. This chain is 5-hydroxytryptamine receptor, found in Bombyx mori (Silk moth).